We begin with the raw amino-acid sequence, 266 residues long: Nuclease (266 aa).

A signal peptide spans 1–21 (MRFNNKMLALAALLFAAQASA). Cys-30 and Cys-34 are joined by a disulfide. Residue His-110 is the Proton acceptor of the active site. Position 140 (Asn-140) interacts with Mg(2+). An intrachain disulfide couples Cys-222 to Cys-264.

It belongs to the DNA/RNA non-specific endonuclease family. In terms of assembly, homodimer. It depends on Mg(2+) as a cofactor.

It is found in the secreted. It carries out the reaction Endonucleolytic cleavage to 5'-phosphomononucleotide and 5'-phosphooligonucleotide end-products.. Catalyzes the hydrolysis of both DNA and RNA, double- or single-stranded, at the 3'position of the phosphodiester bond to produce 5'-phosphorylated mono-, di-, tri- and tetranucleotides. DNA is a slightly better substrate than RNA. This chain is Nuclease (nucA), found in Serratia marcescens.